The following is a 1728-amino-acid chain: Lysophospholipase NTE1 (1728 aa).

Topologically, residues 1–44 are cytoplasmic; the sequence is MDSSSIAHESDIVSTERNILPERFISNKQQGNYLEDGSGDGNGK. The helical transmembrane segment at 45-65 threads the bilayer; sequence AAEHWLLAAIFNFFWVISYFI. Topologically, residues 66 to 97 are lumenal; it reads SGSTHIAFRSSWYIVSLLLLKFPKWIIVEANH. Residues 98–118 form a helical membrane-spanning segment; it reads IHLTIPFSVLVVTLAIIFYVS. Topologically, residues 119–1728 are cytoplasmic; sequence YEFLKGRLLS…GFFLHRRNSI (1610 aa). Over residues 141–150 the composition is skewed to low complexity; sequence SLNSKNSKSS. 6 disordered regions span residues 141–167, 285–368, 406–436, 454–488, 596–660, and 687–756; these read SLNSKNSKSSRLLHHDSKDSNTTRRRR, RKKK…DEST, NDNVTSPSRTGRMDSNYTNPVERPTSKLSTS, TEASYRSTSNPSNNFSKDNDPLSKSISGPDAVTTP, NLQK…TGSR, and ASPS…FTSF. The span at 153–162 shows a compositional bias: basic and acidic residues; that stretch reads LHHDSKDSNT. 2 stretches are compositionally biased toward polar residues: residues 293 to 303 and 326 to 336; these read SRHGQYNNNSD and MRSSSRNQNIP. The span at 345–367 shows a compositional bias: acidic residues; the sequence is SSDEESDINDGDSESQSESDDES. Polar residues-rich tracts occupy residues 406 to 424, 454 to 479, and 599 to 609; these read NDNVTSPSRTGRMDSNYTN, TEASYRSTSNPSNNFSKDNDPLSKSI, and KGFQSPTSSRL. A compositionally biased stretch (low complexity) spans 610 to 628; sequence TSNFNGNSNNQRTNSRNSQ. Composition is skewed to polar residues over residues 642-657 and 729-756; these read ELSQQSSMIHSPTPIT and IYNNQSSSRSDALKGNNSNNKDINFTSF. A nucleoside 3',5'-cyclic phosphate contacts are provided by residues 854 to 987 and 983 to 1121; these read SPTL…LTSL and SLTS…VAKK. The segment at 1034–1055 is disordered; the sequence is PELEENSTDYPNDGEEKDSSRD. Residues 1036–1049 are compositionally biased toward acidic residues; sequence LEENSTDYPNDGEE. The region spanning 1422 to 1586 is the PNPLA domain; that stretch reads LVLGGGGARG…VDNLPVLEMK (165 aa). Positions 1426–1431 match the GXGXXG motif; that stretch reads GGGARG. The GXSXG signature appears at 1453-1457; sequence GTSIG. S1455 (nucleophile) is an active-site residue. D1573 functions as the Proton acceptor in the catalytic mechanism. Residues 1573-1575 carry the DGA/G motif; sequence DGG.

This sequence belongs to the NTE family.

It localises to the endoplasmic reticulum membrane. The enzyme catalyses a 1-acyl-sn-glycero-3-phosphocholine + H2O = sn-glycerol 3-phosphocholine + a fatty acid + H(+). Inhibited by organophosphorus esters. Functionally, intracellular phospholipase B that catalyzes the double deacylation of phosphatidylcholine (PC) to glycerophosphocholine (GroPCho). Plays an important role in membrane lipid homeostasis. Responsible for the rapid PC turnover in response to inositol, elevated temperatures, or when choline is present in the growth medium. The sequence is that of Lysophospholipase NTE1 (NTE1) from Candida glabrata (strain ATCC 2001 / BCRC 20586 / JCM 3761 / NBRC 0622 / NRRL Y-65 / CBS 138) (Yeast).